Reading from the N-terminus, the 423-residue chain is Glucose-1-phosphate adenylyltransferase (423 aa).

Alpha-D-glucose 1-phosphate contacts are provided by residues Y107, G172, 187–188, and S205; that span reads EK.

Belongs to the bacterial/plant glucose-1-phosphate adenylyltransferase family. In terms of assembly, homotetramer.

It carries out the reaction alpha-D-glucose 1-phosphate + ATP + H(+) = ADP-alpha-D-glucose + diphosphate. The protein operates within glycan biosynthesis; glycogen biosynthesis. Involved in the biosynthesis of ADP-glucose, a building block required for the elongation reactions to produce glycogen. Catalyzes the reaction between ATP and alpha-D-glucose 1-phosphate (G1P) to produce pyrophosphate and ADP-Glc. The sequence is that of Glucose-1-phosphate adenylyltransferase from Albidiferax ferrireducens (strain ATCC BAA-621 / DSM 15236 / T118) (Rhodoferax ferrireducens).